The sequence spans 163 residues: Lipoprotein signal peptidase (163 aa).

Helical transmembrane passes span 8 to 28, 61 to 81, and 93 to 113; these read FFLL…YWVM, FSHW…LWLW, and FGFT…ICFY. Active-site residues include D117 and D136. Residues 128-148 traverse the membrane as a helical segment; the sequence is YFAVFNLADTFITLGVIAIII.

The protein belongs to the peptidase A8 family.

The protein resides in the cell inner membrane. The enzyme catalyses Release of signal peptides from bacterial membrane prolipoproteins. Hydrolyzes -Xaa-Yaa-Zaa-|-(S,diacylglyceryl)Cys-, in which Xaa is hydrophobic (preferably Leu), and Yaa (Ala or Ser) and Zaa (Gly or Ala) have small, neutral side chains.. The protein operates within protein modification; lipoprotein biosynthesis (signal peptide cleavage). Functionally, this protein specifically catalyzes the removal of signal peptides from prolipoproteins. The sequence is that of Lipoprotein signal peptidase from Bartonella henselae (strain ATCC 49882 / DSM 28221 / CCUG 30454 / Houston 1) (Rochalimaea henselae).